The chain runs to 149 residues: Calmodulin (149 aa).

Residue alanine 2 is modified to N-acetylalanine. EF-hand domains lie at 8–43 (EQIAEFKEAFALFDKDGDGTITTKELGTVMRSLGQN), 44–79 (PTEAELQDMINEVDADGNGTIDFPEFLSLMARKMKE), 81–116 (DSEEELIEAFKVFDRDGNGLISAAELRHVMTNLGEK), and 117–149 (LTDDEVDEMIREADIDGDGHINYEEFVRMMVSK). An N6,N6-dimethyllysine modification is found at lysine 14. The Ca(2+) site is built by aspartate 21, aspartate 23, aspartate 25, threonine 27, glutamate 32, aspartate 57, aspartate 59, asparagine 61, threonine 63, glutamate 68, aspartate 94, aspartate 96, asparagine 98, and glutamate 105. Lysine 116 is modified (N6,N6,N6-trimethyllysine). Residues aspartate 130, aspartate 132, aspartate 134, histidine 136, and glutamate 141 each coordinate Ca(2+).

The protein belongs to the calmodulin family. The pantophobiac mutant CAM2 is undermethylated on Lys-116.

Functionally, calmodulin mediates the control of a large number of enzymes, ion channels and other proteins by Ca(2+). Among the enzymes to be stimulated by the calmodulin-Ca(2+) complex are a number of protein kinases and phosphatases. This Paramecium tetraurelia protein is Calmodulin (CAM).